We begin with the raw amino-acid sequence, 499 residues long: MPQSMTNAFWHNFLGHTPNWYKKTILGFLVINIVLSQVSPFLAGWALIIEFIFTLAMALKCYPLQPGGLLAIQAVLLGLTSADSVYHEVLANFKVILLLMFMVAGIYFMKDMLLFVFTKILLGIRSKLLLSLLFSFVAAVLSAFLDALTVTAVLIAVAVGFYAVYHRFASGSGHGNDHDHSADDNVHDLHREDLDTFRSFLRSLIMHGAVGTALGGVATLVGEPQNLLIAEIAGWNFIEFYLVMAPISVPALIGGLLTCAILEKTGICGYGAKLPDSVRQILVDFDKKETAKRGFGDKAQLLVQAVVAVVLVFALALHLAEVGLIGLLIIVLLTAFNGITDEHRIGHAFEEALPFTALLVVFFAVVAVIHDQHLFTPVIDYVLAMEQGAQAPMFFVANGVLSMISDNVFVATVYINEVKAAFDAGTISREHFDVLAVAINAGTNLPSVATPNGQAAFLFLLTSALAPLIRLSYGKMVIMALPYTIVLGAVGLGSVILFY.

The next 12 helical transmembrane spans lie at 38–58 (VSPFLAGWALIIEFIFTLAMA), 62–82 (YPLQPGGLLAIQAVLLGLTSA), 89–109 (VLANFKVILLLMFMVAGIYFM), 128–148 (LLLSLLFSFVAAVLSAFLDAL), 149–169 (TVTAVLIAVAVGFYAVYHRFA), 204–224 (LIMHGAVGTALGGVATLVGEP), 242–262 (LVMAPISVPALIGGLLTCAIL), 310–330 (VLVFALALHLAEVGLIGLLII), 349–369 (FEEALPFTALLVVFFAVVAVI), 393–413 (MFFVANGVLSMISDNVFVATV), 449–469 (ATPNGQAAFLFLLTSALAPLI), and 478–498 (IMALPYTIVLGAVGLGSVILF).

Belongs to the NhaB Na(+)/H(+) (TC 2.A.34) antiporter family.

It is found in the cell inner membrane. The catalysed reaction is 2 Na(+)(in) + 3 H(+)(out) = 2 Na(+)(out) + 3 H(+)(in). Functionally, na(+)/H(+) antiporter that extrudes sodium in exchange for external protons. The chain is Na(+)/H(+) antiporter NhaB from Saccharophagus degradans (strain 2-40 / ATCC 43961 / DSM 17024).